Here is a 59-residue protein sequence, read N- to C-terminus: Photosystem II reaction center protein K (59 aa).

The propeptide occupies 1–22 (MLNIFSLICLNSALYPSSLFFA). A helical transmembrane segment spans residues 38–58 (MPVIPLFFFLLAFVWQAAVSF).

This sequence belongs to the PsbK family. In terms of assembly, PSII is composed of 1 copy each of membrane proteins PsbA, PsbB, PsbC, PsbD, PsbE, PsbF, PsbH, PsbI, PsbJ, PsbK, PsbL, PsbM, PsbT, PsbX, PsbY, PsbZ, Psb30/Ycf12, at least 3 peripheral proteins of the oxygen-evolving complex and a large number of cofactors. It forms dimeric complexes.

Its subcellular location is the plastid. It localises to the chloroplast thylakoid membrane. One of the components of the core complex of photosystem II (PSII). PSII is a light-driven water:plastoquinone oxidoreductase that uses light energy to abstract electrons from H(2)O, generating O(2) and a proton gradient subsequently used for ATP formation. It consists of a core antenna complex that captures photons, and an electron transfer chain that converts photonic excitation into a charge separation. In Lactuca sativa (Garden lettuce), this protein is Photosystem II reaction center protein K.